A 398-amino-acid polypeptide reads, in one-letter code: MTYNKRLFTSESVTEGHPDKIADQVSDAILDEILKDDPNARVACETTVTTGMALISGEISTSTYVDIPKVVRETIKGIGYTRAKYGYDYQTMAVLTAIDEQSPDIAQGVDKALEYRNDISEEEIEATGAGDQGLMFGYATNETETYMPLPIFLSHQLAKRLSDVRKDGILNYLRPDGKVQVTVEYDESDKPKRIDTIVVSSQHADDIELEQIQSDIKEHVIYPTVPEGLIDNETKFFINPTGRFVIGGPQGDAGLTGRKIIVDTYGGYARHGGGCFSGKDPTKVDRSAAYAARYVAKNIVAAGLADQCEVQLAYAIGVAEPVSISIDTFKTGKVSEAQLVEAVRANFDLRPAGIIKMLDLKHPIYKQTAAYGHFGRTDVLLPWEKLDKVNVLKDAVQA.

H17 contributes to the ATP binding site. Residue D19 coordinates Mg(2+). E45 provides a ligand contact to K(+). L-methionine-binding residues include E58 and Q101. The interval 101-111 is flexible loop; it reads QSPDIAQGVDK. ATP is bound by residues 176 to 178, 243 to 244, D252, 258 to 259, and K279; these read DGK, RF, and RK. D252 is a binding site for L-methionine. K283 provides a ligand contact to L-methionine.

This sequence belongs to the AdoMet synthase family. In terms of assembly, homotetramer; dimer of dimers. It depends on Mg(2+) as a cofactor. K(+) is required as a cofactor.

It localises to the cytoplasm. The catalysed reaction is L-methionine + ATP + H2O = S-adenosyl-L-methionine + phosphate + diphosphate. It functions in the pathway amino-acid biosynthesis; S-adenosyl-L-methionine biosynthesis; S-adenosyl-L-methionine from L-methionine: step 1/1. Its function is as follows. Catalyzes the formation of S-adenosylmethionine (AdoMet) from methionine and ATP. The overall synthetic reaction is composed of two sequential steps, AdoMet formation and the subsequent tripolyphosphate hydrolysis which occurs prior to release of AdoMet from the enzyme. This Staphylococcus haemolyticus (strain JCSC1435) protein is S-adenosylmethionine synthase.